A 370-amino-acid chain; its full sequence is Queuine tRNA-ribosyltransferase (370 aa).

Catalysis depends on aspartate 89, which acts as the Proton acceptor. Residues 89–93, aspartate 143, and glycine 214 contribute to the substrate site; that span reads DSGGF. Positions 245–251 are RNA binding; the sequence is GVGKPED. Aspartate 264 (nucleophile) is an active-site residue. The interval 269–273 is RNA binding; important for wobble base 34 recognition; sequence TRNAR. Residues cysteine 302, cysteine 304, cysteine 307, and histidine 333 each coordinate Zn(2+).

The protein belongs to the queuine tRNA-ribosyltransferase family. As to quaternary structure, homodimer. Within each dimer, one monomer is responsible for RNA recognition and catalysis, while the other monomer binds to the replacement base PreQ1. Zn(2+) is required as a cofactor.

It carries out the reaction 7-aminomethyl-7-carbaguanine + guanosine(34) in tRNA = 7-aminomethyl-7-carbaguanosine(34) in tRNA + guanine. The protein operates within tRNA modification; tRNA-queuosine biosynthesis. Functionally, catalyzes the base-exchange of a guanine (G) residue with the queuine precursor 7-aminomethyl-7-deazaguanine (PreQ1) at position 34 (anticodon wobble position) in tRNAs with GU(N) anticodons (tRNA-Asp, -Asn, -His and -Tyr). Catalysis occurs through a double-displacement mechanism. The nucleophile active site attacks the C1' of nucleotide 34 to detach the guanine base from the RNA, forming a covalent enzyme-RNA intermediate. The proton acceptor active site deprotonates the incoming PreQ1, allowing a nucleophilic attack on the C1' of the ribose to form the product. After dissociation, two additional enzymatic reactions on the tRNA convert PreQ1 to queuine (Q), resulting in the hypermodified nucleoside queuosine (7-(((4,5-cis-dihydroxy-2-cyclopenten-1-yl)amino)methyl)-7-deazaguanosine). This chain is Queuine tRNA-ribosyltransferase, found in Buchnera aphidicola subsp. Acyrthosiphon pisum (strain APS) (Acyrthosiphon pisum symbiotic bacterium).